Reading from the N-terminus, the 72-residue chain is Altered inheritance of mitochondria protein 4 (72 aa).

It belongs to the AIM4 family.

The protein resides in the cytoplasm. In Zygosaccharomyces rouxii (strain ATCC 2623 / CBS 732 / NBRC 1130 / NCYC 568 / NRRL Y-229), this protein is Altered inheritance of mitochondria protein 4 (AIM4).